Here is a 193-residue protein sequence, read N- to C-terminus: ATP-dependent Clp protease proteolytic subunit (193 aa).

The active-site Nucleophile is the serine 97. Residue histidine 122 is part of the active site.

Belongs to the peptidase S14 family. Fourteen ClpP subunits assemble into 2 heptameric rings which stack back to back to give a disk-like structure with a central cavity, resembling the structure of eukaryotic proteasomes.

It localises to the cytoplasm. The catalysed reaction is Hydrolysis of proteins to small peptides in the presence of ATP and magnesium. alpha-casein is the usual test substrate. In the absence of ATP, only oligopeptides shorter than five residues are hydrolyzed (such as succinyl-Leu-Tyr-|-NHMec, and Leu-Tyr-Leu-|-Tyr-Trp, in which cleavage of the -Tyr-|-Leu- and -Tyr-|-Trp bonds also occurs).. In terms of biological role, cleaves peptides in various proteins in a process that requires ATP hydrolysis. Has a chymotrypsin-like activity. Plays a major role in the degradation of misfolded proteins. The protein is ATP-dependent Clp protease proteolytic subunit of Fusobacterium nucleatum subsp. nucleatum (strain ATCC 25586 / DSM 15643 / BCRC 10681 / CIP 101130 / JCM 8532 / KCTC 2640 / LMG 13131 / VPI 4355).